The following is a 296-amino-acid chain: MFPVFHLSGESRRQMLQTALRFPHVFKARAEDSHKGTFGTLAVVGGSAGMSGAPVLAASAAMYLGCGKVWAGFNQDTLPFAVIAGFPEIMLDTADSLAKRQDINAWVVGCGLGTGRAAVGTLAGILTEHTDKPVVLDADALNILSTDAETRNLARGCKNLILTPHPAEAARLLGTTVAQVQADRTAAVRKIGAIFGATVVLKGHKTLVASPDTEIYVNESGNAGLATAGSGDVLGGIIGSLLAQGVPVFEAACAGAWLHGAAADVIKESAGIAAGLLAGEIAPAARWLRNRITKSM.

Residues 18–292 (TALRFPHVFK…PAARWLRNRI (275 aa)) form the YjeF C-terminal domain. (6S)-NADPHX is bound by residues alanine 53, glycine 113, and histidine 165. AMP-binding positions include 202–206 (KGHKT) and glycine 231. Residue aspartate 232 coordinates (6S)-NADPHX.

The protein belongs to the NnrD/CARKD family. Homotetramer. Mg(2+) is required as a cofactor.

It catalyses the reaction (6S)-NADHX + ADP = AMP + phosphate + NADH + H(+). The enzyme catalyses (6S)-NADPHX + ADP = AMP + phosphate + NADPH + H(+). Its function is as follows. Catalyzes the dehydration of the S-form of NAD(P)HX at the expense of ADP, which is converted to AMP. Together with NAD(P)HX epimerase, which catalyzes the epimerization of the S- and R-forms, the enzyme allows the repair of both epimers of NAD(P)HX, a damaged form of NAD(P)H that is a result of enzymatic or heat-dependent hydration. The sequence is that of ADP-dependent (S)-NAD(P)H-hydrate dehydratase from Neisseria meningitidis serogroup B (strain ATCC BAA-335 / MC58).